Consider the following 105-residue polypeptide: Large ribosomal subunit protein uL24 (105 aa).

It belongs to the universal ribosomal protein uL24 family. In terms of assembly, part of the 50S ribosomal subunit.

Its function is as follows. One of two assembly initiator proteins, it binds directly to the 5'-end of the 23S rRNA, where it nucleates assembly of the 50S subunit. Functionally, one of the proteins that surrounds the polypeptide exit tunnel on the outside of the subunit. The sequence is that of Large ribosomal subunit protein uL24 from Halorhodospira halophila (strain DSM 244 / SL1) (Ectothiorhodospira halophila (strain DSM 244 / SL1)).